The chain runs to 142 residues: MSNKHPLVQVIENAQLIERPSFAPGDTVVVQVKVREGERERLQAFEGVVIAKRNRGLNSAFTVRKISSGVGVERAFQLHSPIIDSIEVKRRGAVRRAKLYYLRERSGKSARIREKLAPRAPKVVKAKTDARVPDAVETAPGI.

The protein belongs to the bacterial ribosomal protein bL19 family.

In terms of biological role, this protein is located at the 30S-50S ribosomal subunit interface and may play a role in the structure and function of the aminoacyl-tRNA binding site. The polypeptide is Large ribosomal subunit protein bL19 (Psychrobacter cryohalolentis (strain ATCC BAA-1226 / DSM 17306 / VKM B-2378 / K5)).